The chain runs to 350 residues: Cytochrome c biogenesis protein CcsA (350 aa).

8 consecutive transmembrane segments (helical) span residues 23-43 (NVAF…AAFP), 47-67 (LLAE…AALL), 82-102 (LYES…LALH), 108-128 (WVGV…ALVL), 153-173 (VMLL…SFLI), 258-278 (LIGL…VWAN), 293-313 (WALI…TKGW), and 319-339 (ALLA…VNFL).

It belongs to the CcmF/CycK/Ccl1/NrfE/CcsA family. As to quaternary structure, may interact with ccs1.

It localises to the cellular thylakoid membrane. In terms of biological role, required during biogenesis of c-type cytochromes (cytochrome c6 and cytochrome f) at the step of heme attachment. The protein is Cytochrome c biogenesis protein CcsA of Synechococcus sp. (strain JA-2-3B'a(2-13)) (Cyanobacteria bacterium Yellowstone B-Prime).